The following is a 120-amino-acid chain: Large ribosomal subunit protein uL18 (120 aa).

This sequence belongs to the universal ribosomal protein uL18 family. In terms of assembly, part of the 50S ribosomal subunit; part of the 5S rRNA/L5/L18/L25 subcomplex. Contacts the 5S and 23S rRNAs.

Functionally, this is one of the proteins that bind and probably mediate the attachment of the 5S RNA into the large ribosomal subunit, where it forms part of the central protuberance. This chain is Large ribosomal subunit protein uL18, found in Rhizobium rhizogenes (strain K84 / ATCC BAA-868) (Agrobacterium radiobacter).